The following is a 98-amino-acid chain: UPF0358 protein LCA_1078 (98 aa).

It belongs to the UPF0358 family.

In Latilactobacillus sakei subsp. sakei (strain 23K) (Lactobacillus sakei subsp. sakei), this protein is UPF0358 protein LCA_1078.